Here is a 397-residue protein sequence, read N- to C-terminus: Lysophospholipid transporter LplT (397 aa).

At 1-17 (MSESVHTNTSLWSKGMK) the chain is on the periplasmic side. The helical transmembrane segment at 18–38 (AVIVAQFLSAFGDNALLFATL) threads the bilayer. The Cytoplasmic portion of the chain corresponds to 39–52 (ALLKAQFYPEWSQP). The chain crosses the membrane as a helical span at residues 53–73 (ILQMVFVGAYILFAPFVGQVA). At 74–90 (DSFAKGRVMMFANGLKL) the chain is on the periplasmic side. Residues 91–111 (LGAASICFGINPFLGYTLVGV) traverse the membrane as a helical segment. At 112–144 (GAAAYSPAKYGILGELTTGSKLVKANGLMEAST) the chain is on the cytoplasmic side. The chain crosses the membrane as a helical span at residues 145 to 165 (IAAILLGSVAGGVLADWHVLV). A166 is a topological domain (periplasmic). The helical transmembrane segment at 167–187 (LAACALAYGGAVVANIYIPKL) threads the bilayer. At 188 to 226 (AAARPGQSWNLINMTRSFLNACTSLWRNGETRFSLVGTS) the chain is on the cytoplasmic side. The helical transmembrane segment at 227–247 (LFWGAGVTLRFLLVLWVPVAL) threads the bilayer. The Periplasmic segment spans residues 248–256 (GITDNATPT). Residues 257-277 (YLNAMVAIGIVVGAGAAAKLV) traverse the membrane as a helical segment. The Cytoplasmic portion of the chain corresponds to 278 to 280 (TLE). Residues 281 to 301 (TVSRCMPAGILIGVVVLIFSL) traverse the membrane as a helical segment. Residues 302 to 304 (QHE) lie on the Periplasmic side of the membrane. The chain crosses the membrane as a helical span at residues 305–325 (LLPAYALLMLIGVMGGFFVVP). Residues 326 to 343 (LNALLQERGKKSVGAGNA) lie on the Cytoplasmic side of the membrane. A helical transmembrane segment spans residues 344–364 (IAVQNLGENSAMLLMLGIYSL). The Periplasmic segment spans residues 365 to 366 (AV). The chain crosses the membrane as a helical span at residues 367–387 (MVGIPVVPIGIGFGALFALAI). Residues 388–397 (TALWIWQRRH) lie on the Cytoplasmic side of the membrane.

This sequence belongs to the major facilitator superfamily. LplT (TC 2.A.1.42) family.

The protein localises to the cell inner membrane. Catalyzes the facilitated diffusion of 2-acyl-glycero-3-phosphoethanolamine (2-acyl-GPE) into the cell. In Escherichia coli (strain ATCC 8739 / DSM 1576 / NBRC 3972 / NCIMB 8545 / WDCM 00012 / Crooks), this protein is Lysophospholipid transporter LplT.